The chain runs to 549 residues: uncharacterized protein (549 aa).

The first 19 residues, Met1–Ala19, serve as a signal peptide directing secretion.

This is an uncharacterized protein from Escherichia coli (strain K12).